Here is a 318-residue protein sequence, read N- to C-terminus: MTNSGDEEITPASLKATRKGERVSIGSLLPPSELVRSGESTEHIRVLAETDEDLPPIVVHRGTRRVVDGMHRLWAARFRGDESIEVVFVDGSPADVFVLAVELNRAHGLPLTLDERKSAAAQIMDSHPHWSDRKIARTTGLAASTVASLRSSSTAGTVGRRTGQDGRSRPNDGTDGRQRAAALLARNPNASLREVTRAAGISVGTASDVRARLRRGEPALTARQQAVMKLRPAAAQRSGPDYGRVLENLRKDPSLRFTDLGRRLLRLLDGSVPGSVEQIAQIADGVPEHCRTVVVDMARECAAAWQHLADQLADRDTA.

A compositionally biased stretch (polar residues) spans Val-146–Gly-156. A disordered region spans residues Val-146–Gly-176. The span at Thr-162–Gly-176 shows a compositional bias: basic and acidic residues.

This sequence belongs to the ParB family.

Transcription regulator that specifically activates expression of genes involved in the novobiocin biosynthesis pathway. Binds 5'-GTTCRACTG(N)(11)CRGTYGAAC-3' DNA sequence. The polypeptide is Transcriptional regulator NovG (novG) (Streptomyces niveus (Streptomyces spheroides)).